The chain runs to 851 residues: Envelope glycoprotein gp160 (851 aa).

Positions 1–31 (MRAREIQRNWQHLGKRGILFLGILIICSAAN) are cleaved as a signal peptide. The Extracellular portion of the chain corresponds to 32–679 (NLWVTVYYGV…ISNWLWYIKI (648 aa)). Cysteine 53 and cysteine 73 form a disulfide bridge. N-linked (GlcNAc...) asparagine; by host glycans are attached at residues asparagine 87, asparagine 132, asparagine 136, asparagine 143, asparagine 148, asparagine 159, asparagine 163, asparagine 193, asparagine 205, asparagine 238, asparagine 242, asparagine 249, asparagine 270, asparagine 303, asparagine 309, asparagine 339, asparagine 346, and asparagine 361. 5 cysteine pairs are disulfide-bonded: cysteine 118/cysteine 213, cysteine 125/cysteine 204, cysteine 130/cysteine 160, cysteine 226/cysteine 255, and cysteine 236/cysteine 247. The interval 130 to 159 (CTNVTNNRTNANKNDTNINATVTSTDEIKN) is V1. A V2 region spans residues 160–204 (CSFNITTELKDKKKRVSALFYKLDIVQIKQSEINQSESEDRLINC). Residues 304–337 (CTRPSNNTRKSIHIGPGRAFYATGDIIGDIRQAH) are V3. Residues cysteine 304 and cysteine 338 are joined by a disulfide bond. The segment at 369–379 (SSGGDPQVTRH) is CD4-binding loop. Intrachain disulfides connect cysteine 383–cysteine 438 and cysteine 390–cysteine 411. The V4 stretch occupies residues 390 to 411 (CDTTDTVDDTEEEEDTTITIPC). N-linked (GlcNAc...) asparagine; by host glycosylation is found at asparagine 435, asparagine 441, and asparagine 455. The tract at residues 449 to 469 (RDGGNDNNTRTEETFRPGGGD) is disordered. V5 stretches follow at residues 454-466 (DNNT…FRPG) and 456-466 (NTRTEETFRPG). A compositionally biased stretch (basic and acidic residues) spans 457–469 (TRTEETFRPGGGD). The tract at residues 507-527 (AVGIGALFLGFLGAAGSTMGA) is fusion peptide. The immunosuppression stretch occupies residues 569–587 (KQLRARVLAVERYLRDQQL). Cysteine 593 and cysteine 599 are oxidised to a cystine. Asparagine 606, asparagine 611, asparagine 620, and asparagine 632 each carry an N-linked (GlcNAc...) asparagine; by host glycan. A coiled-coil region spans residues 628-662 (KEISNHTSTIYRLIEESQIQQEKNEQDLLALDKWA). Residues 657 to 678 (ALDKWASLWNWFDISNWLWYIK) are MPER; binding to GalCer. Residues 680-700 (FIMIVGGLIGLRIVFTVLSVV) form a helical membrane-spanning segment. Topologically, residues 701–851 (NRVRQGYSPL…IRQGFERLLL (151 aa)) are cytoplasmic. The YXXL motif; contains endocytosis signal signature appears at 707–710 (YSPL). The tract at residues 713 to 737 (QTLTPSPRGPDRPEGIEEGGGEQDK) is disordered. Cysteine 759 carries the S-palmitoyl cysteine; by host lipid modification. The Di-leucine internalization motif motif lies at 850-851 (LL).

The protein belongs to the HIV-1 env protein family. The mature envelope protein (Env) consists of a homotrimer of non-covalently associated gp120-gp41 heterodimers. The resulting complex protrudes from the virus surface as a spike. There seems to be as few as 10 spikes on the average virion. Interacts with host CD4, CCR5 and CXCR4. Gp120 also interacts with the C-type lectins CD209/DC-SIGN and CLEC4M/DC-SIGNR (collectively referred to as DC-SIGN(R)). Gp120 and gp41 interact with GalCer. Gp120 interacts with host ITGA4/ITGB7 complex; on CD4+ T-cells, this interaction results in rapid activation of integrin ITGAL/LFA-1, which facilitates efficient cell-to-cell spreading of HIV-1. Gp120 interacts with cell-associated heparan sulfate; this interaction increases virus infectivity on permissive cells and may be involved in infection of CD4- cells. As to quaternary structure, the mature envelope protein (Env) consists of a homotrimer of non-covalently associated gp120-gp41 heterodimers. The resulting complex protrudes from the virus surface as a spike. There seems to be as few as 10 spikes on the average virion. In terms of processing, highly glycosylated by host. The high number of glycan on the protein is reffered to as 'glycan shield' because it contributes to hide protein sequence from adaptive immune system. Palmitoylation of the transmembrane protein and of Env polyprotein (prior to its proteolytic cleavage) is essential for their association with host cell membrane lipid rafts. Palmitoylation is therefore required for envelope trafficking to classical lipid rafts, but not for viral replication. Post-translationally, specific enzymatic cleavages in vivo yield mature proteins. Envelope glycoproteins are synthesized as an inactive precursor that is heavily N-glycosylated and processed likely by host cell furin in the Golgi to yield the mature SU and TM proteins. The cleavage site between SU and TM requires the minimal sequence [KR]-X-[KR]-R. About 2 of the 9 disulfide bonds of gp41 are reduced by P4HB/PDI, following binding to CD4 receptor.

The protein resides in the virion membrane. The protein localises to the host cell membrane. Its subcellular location is the host endosome membrane. Functionally, oligomerizes in the host endoplasmic reticulum into predominantly trimers. In a second time, gp160 transits in the host Golgi, where glycosylation is completed. The precursor is then proteolytically cleaved in the trans-Golgi and thereby activated by cellular furin or furin-like proteases to produce gp120 and gp41. Its function is as follows. Attaches the virus to the host lymphoid cell by binding to the primary receptor CD4. This interaction induces a structural rearrangement creating a high affinity binding site for a chemokine coreceptor like CXCR4 and/or CCR5. Acts as a ligand for CD209/DC-SIGN and CLEC4M/DC-SIGNR, which are respectively found on dendritic cells (DCs), and on endothelial cells of liver sinusoids and lymph node sinuses. These interactions allow capture of viral particles at mucosal surfaces by these cells and subsequent transmission to permissive cells. HIV subverts the migration properties of dendritic cells to gain access to CD4+ T-cells in lymph nodes. Virus transmission to permissive T-cells occurs either in trans (without DCs infection, through viral capture and transmission), or in cis (following DCs productive infection, through the usual CD4-gp120 interaction), thereby inducing a robust infection. In trans infection, bound virions remain infectious over days and it is proposed that they are not degraded, but protected in non-lysosomal acidic organelles within the DCs close to the cell membrane thus contributing to the viral infectious potential during DCs' migration from the periphery to the lymphoid tissues. On arrival at lymphoid tissues, intact virions recycle back to DCs' cell surface allowing virus transmission to CD4+ T-cells. In terms of biological role, acts as a class I viral fusion protein. Under the current model, the protein has at least 3 conformational states: pre-fusion native state, pre-hairpin intermediate state, and post-fusion hairpin state. During fusion of viral and target intracellular membranes, the coiled coil regions (heptad repeats) assume a trimer-of-hairpins structure, positioning the fusion peptide in close proximity to the C-terminal region of the ectodomain. The formation of this structure appears to drive apposition and subsequent fusion of viral and target cell membranes. Complete fusion occurs in host cell endosomes and is dynamin-dependent, however some lipid transfer might occur at the plasma membrane. The virus undergoes clathrin-dependent internalization long before endosomal fusion, thus minimizing the surface exposure of conserved viral epitopes during fusion and reducing the efficacy of inhibitors targeting these epitopes. Membranes fusion leads to delivery of the nucleocapsid into the cytoplasm. The polypeptide is Envelope glycoprotein gp160 (Homo sapiens (Human)).